The primary structure comprises 342 residues: Dihydroorotase (342 aa).

Residues His13 and His15 each coordinate Zn(2+). Substrate contacts are provided by residues 15 to 17 (HLR) and Asn41. The Zn(2+) site is built by Lys97, His134, and His172. N6-carboxylysine is present on Lys97. His134 contacts substrate. Leu217 contacts substrate. Zn(2+) is bound at residue Asp245. The active site involves Asp245. 2 residues coordinate substrate: His249 and Ala261.

This sequence belongs to the metallo-dependent hydrolases superfamily. DHOase family. Class II DHOase subfamily. Homodimer. Requires Zn(2+) as cofactor.

It catalyses the reaction (S)-dihydroorotate + H2O = N-carbamoyl-L-aspartate + H(+). It participates in pyrimidine metabolism; UMP biosynthesis via de novo pathway; (S)-dihydroorotate from bicarbonate: step 3/3. Functionally, catalyzes the reversible cyclization of carbamoyl aspartate to dihydroorotate. The sequence is that of Dihydroorotase from Shewanella amazonensis (strain ATCC BAA-1098 / SB2B).